Here is a 477-residue protein sequence, read N- to C-terminus: Delayed-rectifier potassium channel regulatory subunit KCNS2 (477 aa).

Over 1–184 (MTRQSLWDLS…LALDNPGYSV (184 aa)) the chain is Cytoplasmic. Residues 185 to 206 (LSRVFSVLSILVVLGSIITMCL) traverse the membrane as a helical segment. Topologically, residues 207–225 (NSLPDFQIPDSQGNPGEDP) are extracellular. The chain crosses the membrane as a helical span at residues 226–248 (RFEIVEHFGIAWFTFELVARFAV). Over 249–259 (APDFLKFFKNA) the chain is Cytoplasmic. Residues 260–280 (LNLIDLMSIVPFYITLVVNLV) form a helical membrane-spanning segment. Residues 281–290 (VESSPTLANL) lie on the Extracellular side of the membrane. Residues 291 to 311 (GRVAQVLRLMRIFRILKLARH) traverse the membrane as a helical; Voltage-sensor segment. Residues 312 to 326 (STGLRSLGATLKYSY) lie on the Cytoplasmic side of the membrane. The helical transmembrane segment at 327-348 (KEVGLLLLYLSVGISIFSVVAY) threads the bilayer. The Extracellular portion of the chain corresponds to 349–361 (TIEKEENEGLATI). The helical intramembrane region spans 362–373 (PACWWWATVSMT). The short motif at 374-379 (TVGYGD) is the Selectivity filter element. Residues 374 to 381 (TVGYGDVV) lie within the membrane without spanning it. At 382-388 (PGTTAGK) the chain is on the extracellular side. A helical transmembrane segment spans residues 389–417 (LTASACILAGILVVVLPITLIFNKFSHFY). The Cytoplasmic portion of the chain corresponds to 418–477 (RRQKQLESAMRSCDFGDGMKEVPSVNLRDYYAHKVKSLMASLTNMSRSSPSELSLDDSLH).

This sequence belongs to the potassium channel family. S (TC 1.A.1.2) subfamily. Kv9.2/KCNS2 sub-subfamily. In terms of assembly, heterotetramer with KCNB1 and KCNB2. Does not form homomultimers. In terms of tissue distribution, detected in brain, lung and in pulmonary arteries.

The protein localises to the cell membrane. In terms of biological role, potassium channel regulatory subunit that modulate the delayed rectifier voltage-gated potassium channel activity of KCNB1 and KCNB2 by altering their kinetics, expression levels, and shifting the half-inactivation potential to more polarized values. While it does not form functional channels on its own, it can form functional heterotetrameric channels with KCNB1 and KCNB2. Each regulatory subunit has unique regulatory properties that can lead to extensive inhibition, significant changes in kinetics, and/or substantial shifts in the voltage dependencies of the inactivation process. The chain is Delayed-rectifier potassium channel regulatory subunit KCNS2 from Rattus norvegicus (Rat).